We begin with the raw amino-acid sequence, 932 residues long: Protocadherin gamma-A2 (932 aa).

An N-terminal signal peptide occupies residues 1-28 (MAALQKLPHCRKLFLLCFLLATLWEARA). 6 consecutive Cadherin domains span residues 29 to 133 (GQIR…APRF), 134 to 242 (GVEE…APVF), 243 to 347 (TQPE…APEF), 348 to 452 (YMTS…APAF), 453 to 562 (SRTS…PPEI), and 570 to 682 (DGST…EPSA). The Extracellular portion of the chain corresponds to 29–692 (GQIRYSVREE…KPNDSDLTLY (664 aa)). N419 and N545 each carry an N-linked (GlcNAc...) asparagine glycan. N685 carries N-linked (GlcNAc...) asparagine glycosylation. A helical membrane pass occupies residues 693–713 (LVVAVAAVSCVFLAFVIVLLA). Over 714–932 (HRLRRWHKSR…KKKSGKKEKK (219 aa)) the chain is Cytoplasmic. Disordered stretches follow at residues 798–841 (LEEE…WPNN) and 902–932 (ATLT…KEKK). Residues 806-841 (FSQQAPPNTDWRFSQAQRPGTSGSQNGDDTGTWPNN) are compositionally biased toward polar residues. A compositionally biased stretch (basic residues) spans 922 to 932 (NKKKSGKKEKK).

The protein resides in the cell membrane. In terms of biological role, potential calcium-dependent cell-adhesion protein. May be involved in the establishment and maintenance of specific neuronal connections in the brain. In Pan troglodytes (Chimpanzee), this protein is Protocadherin gamma-A2 (PCDHGA2).